Here is a 250-residue protein sequence, read N- to C-terminus: 2,3-bisphosphoglycerate-dependent phosphoglycerate mutase (250 aa).

Substrate-binding positions include Arg-10 to Asn-17, Thr-23 to Gly-24, Arg-62, Glu-89 to Tyr-92, Lys-100, Arg-116 to Arg-117, and Gly-185 to Asn-186. His-11 serves as the catalytic Tele-phosphohistidine intermediate. Glu-89 serves as the catalytic Proton donor/acceptor.

It belongs to the phosphoglycerate mutase family. BPG-dependent PGAM subfamily. As to quaternary structure, homodimer.

The catalysed reaction is (2R)-2-phosphoglycerate = (2R)-3-phosphoglycerate. The protein operates within carbohydrate degradation; glycolysis; pyruvate from D-glyceraldehyde 3-phosphate: step 3/5. Its function is as follows. Catalyzes the interconversion of 2-phosphoglycerate and 3-phosphoglycerate. This is 2,3-bisphosphoglycerate-dependent phosphoglycerate mutase from Salmonella paratyphi A (strain ATCC 9150 / SARB42).